The following is a 227-amino-acid chain: ATP-dependent Clp protease proteolytic subunit (227 aa).

The active-site Nucleophile is the Ser120. Residue His145 is part of the active site.

Belongs to the peptidase S14 family. In terms of assembly, fourteen ClpP subunits assemble into 2 heptameric rings which stack back to back to give a disk-like structure with a central cavity, resembling the structure of eukaryotic proteasomes.

It localises to the cytoplasm. It carries out the reaction Hydrolysis of proteins to small peptides in the presence of ATP and magnesium. alpha-casein is the usual test substrate. In the absence of ATP, only oligopeptides shorter than five residues are hydrolyzed (such as succinyl-Leu-Tyr-|-NHMec, and Leu-Tyr-Leu-|-Tyr-Trp, in which cleavage of the -Tyr-|-Leu- and -Tyr-|-Trp bonds also occurs).. Functionally, cleaves peptides in various proteins in a process that requires ATP hydrolysis. Has a chymotrypsin-like activity. Plays a major role in the degradation of misfolded proteins. The sequence is that of ATP-dependent Clp protease proteolytic subunit from Rickettsia bellii (strain RML369-C).